The chain runs to 100 residues: MDKSKLFLKSKRSFRRRLPPIGSGDRIDYRNMSLISRFISEQGKILSRRVNRLTLKQQRLITIAIKQARILSSLPFLNNEKQFERTESTPRTTGPRTRKK.

A disordered region spans residues 81 to 100 (KQFERTESTPRTTGPRTRKK). The span at 89–100 (TPRTTGPRTRKK) shows a compositional bias: low complexity.

The protein belongs to the bacterial ribosomal protein bS18 family. As to quaternary structure, part of the 30S ribosomal subunit.

The protein localises to the plastid. It localises to the chloroplast. The protein is Small ribosomal subunit protein bS18c of Nandina domestica (Heavenly bamboo).